A 197-amino-acid polypeptide reads, in one-letter code: Probable molybdenum cofactor guanylyltransferase (197 aa).

GTP contacts are provided by residues 6-8, K18, D65, and D97; that span reads LAG. D97 contacts Mg(2+).

Belongs to the MobA family. Mg(2+) is required as a cofactor.

Its subcellular location is the cytoplasm. It carries out the reaction Mo-molybdopterin + GTP + H(+) = Mo-molybdopterin guanine dinucleotide + diphosphate. Its function is as follows. Transfers a GMP moiety from GTP to Mo-molybdopterin (Mo-MPT) cofactor (Moco or molybdenum cofactor) to form Mo-molybdopterin guanine dinucleotide (Mo-MGD) cofactor. In Staphylococcus carnosus (strain TM300), this protein is Probable molybdenum cofactor guanylyltransferase.